The primary structure comprises 345 residues: Carbamoyl phosphate synthase small chain (345 aa).

Residues 1–169 (MKKYLVMEDG…FVKGEEGGTV (169 aa)) are CPSase. Positions 45, 213, and 215 each coordinate L-glutamine. The 178-residue stretch at 168–345 (TVLFIDLGSK…GEMKRRIGYA (178 aa)) folds into the Glutamine amidotransferase type-1 domain. Cysteine 242 acts as the Nucleophile in catalysis. Phenylalanine 243, glutamine 246, asparagine 282, glycine 284, and tyrosine 285 together coordinate L-glutamine. Active-site residues include histidine 321 and glutamate 323.

It belongs to the CarA family. Composed of two chains; the small (or glutamine) chain promotes the hydrolysis of glutamine to ammonia, which is used by the large (or ammonia) chain to synthesize carbamoyl phosphate. Tetramer of heterodimers (alpha,beta)4.

It carries out the reaction hydrogencarbonate + L-glutamine + 2 ATP + H2O = carbamoyl phosphate + L-glutamate + 2 ADP + phosphate + 2 H(+). The enzyme catalyses L-glutamine + H2O = L-glutamate + NH4(+). Its pathway is amino-acid biosynthesis; L-arginine biosynthesis; carbamoyl phosphate from bicarbonate: step 1/1. It functions in the pathway pyrimidine metabolism; UMP biosynthesis via de novo pathway; (S)-dihydroorotate from bicarbonate: step 1/3. Functionally, small subunit of the glutamine-dependent carbamoyl phosphate synthetase (CPSase). CPSase catalyzes the formation of carbamoyl phosphate from the ammonia moiety of glutamine, carbonate, and phosphate donated by ATP, constituting the first step of 2 biosynthetic pathways, one leading to arginine and/or urea and the other to pyrimidine nucleotides. The small subunit (glutamine amidotransferase) binds and cleaves glutamine to supply the large subunit with the substrate ammonia. The sequence is that of Carbamoyl phosphate synthase small chain from Thermoplasma volcanium (strain ATCC 51530 / DSM 4299 / JCM 9571 / NBRC 15438 / GSS1).